The chain runs to 342 residues: 4-hydroxy-3-methylbut-2-enyl diphosphate reductase (342 aa).

[4Fe-4S] cluster is bound at residue Cys47. (2E)-4-hydroxy-3-methylbut-2-enyl diphosphate-binding residues include His78 and His111. Dimethylallyl diphosphate-binding residues include His78 and His111. 2 residues coordinate isopentenyl diphosphate: His78 and His111. Cys133 contacts [4Fe-4S] cluster. His161 serves as a coordination point for (2E)-4-hydroxy-3-methylbut-2-enyl diphosphate. His161 is a binding site for dimethylallyl diphosphate. Residue His161 participates in isopentenyl diphosphate binding. The active-site Proton donor is Glu163. Residue Thr201 participates in (2E)-4-hydroxy-3-methylbut-2-enyl diphosphate binding. Cys231 contacts [4Fe-4S] cluster. (2E)-4-hydroxy-3-methylbut-2-enyl diphosphate is bound by residues Ser259, Ser260, Asn261, and Ser303. 4 residues coordinate dimethylallyl diphosphate: Ser259, Ser260, Asn261, and Ser303. 4 residues coordinate isopentenyl diphosphate: Ser259, Ser260, Asn261, and Ser303.

The protein belongs to the IspH family. Requires [4Fe-4S] cluster as cofactor.

It carries out the reaction isopentenyl diphosphate + 2 oxidized [2Fe-2S]-[ferredoxin] + H2O = (2E)-4-hydroxy-3-methylbut-2-enyl diphosphate + 2 reduced [2Fe-2S]-[ferredoxin] + 2 H(+). The enzyme catalyses dimethylallyl diphosphate + 2 oxidized [2Fe-2S]-[ferredoxin] + H2O = (2E)-4-hydroxy-3-methylbut-2-enyl diphosphate + 2 reduced [2Fe-2S]-[ferredoxin] + 2 H(+). It functions in the pathway isoprenoid biosynthesis; dimethylallyl diphosphate biosynthesis; dimethylallyl diphosphate from (2E)-4-hydroxy-3-methylbutenyl diphosphate: step 1/1. The protein operates within isoprenoid biosynthesis; isopentenyl diphosphate biosynthesis via DXP pathway; isopentenyl diphosphate from 1-deoxy-D-xylulose 5-phosphate: step 6/6. Catalyzes the conversion of 1-hydroxy-2-methyl-2-(E)-butenyl 4-diphosphate (HMBPP) into a mixture of isopentenyl diphosphate (IPP) and dimethylallyl diphosphate (DMAPP). Acts in the terminal step of the DOXP/MEP pathway for isoprenoid precursor biosynthesis. The sequence is that of 4-hydroxy-3-methylbut-2-enyl diphosphate reductase from Anaplasma marginale (strain Florida).